The following is a 962-amino-acid chain: Protease 3 (962 aa).

The N-terminal stretch at 1–23 is a signal peptide; sequence MPRSTWFKALLLLVALWAPLSQA. H88 serves as a coordination point for Zn(2+). The active-site Proton acceptor is E91. The Zn(2+) site is built by H92 and E169.

Belongs to the peptidase M16 family. As to quaternary structure, monomer. Zn(2+) is required as a cofactor.

Its subcellular location is the periplasm. The enzyme catalyses Preferential cleavage of 16-Tyr-|-Leu-17 and 25-Phe-|-Tyr-26 bonds of oxidized insulin B chain. Also acts on other substrates of Mw less than 7 kDa such as insulin and glucagon.. Its function is as follows. Endopeptidase that degrades small peptides of less than 7 kDa, such as glucagon and insulin. This chain is Protease 3 (ptrA), found in Escherichia coli O157:H7.